Consider the following 217-residue polypeptide: Adapter protein MecA (217 aa).

The protein belongs to the MecA family. As to quaternary structure, homodimer.

Functionally, enables the recognition and targeting of unfolded and aggregated proteins to the ClpC protease or to other proteins involved in proteolysis. The polypeptide is Adapter protein MecA (Listeria innocua serovar 6a (strain ATCC BAA-680 / CLIP 11262)).